Reading from the N-terminus, the 73-residue chain is Conotoxin MaI51 (73 aa).

Positions 1–19 are cleaved as a signal peptide; that stretch reads MQKLTILLLVAAVLLSTQA. Positions 20–41 are excised as a propeptide; that stretch reads LNQEKRPKEMINVLSKGKTNAE. Glutamine 46 is subject to Pyrrolidone carboxylic acid. 3 disulfides stabilise this stretch: cysteine 47–cysteine 61, cysteine 54–cysteine 65, and cysteine 60–cysteine 69. Isoleucine 72 bears the Isoleucine amide mark.

The protein belongs to the conotoxin O2 superfamily. Expressed by the venom duct.

The protein resides in the secreted. The sequence is that of Conotoxin MaI51 from Conus marmoreus (Marble cone).